The sequence spans 90 residues: Small ribosomal subunit protein bS20 (90 aa).

Belongs to the bacterial ribosomal protein bS20 family.

Functionally, binds directly to 16S ribosomal RNA. The protein is Small ribosomal subunit protein bS20 of Rickettsia felis (strain ATCC VR-1525 / URRWXCal2) (Rickettsia azadi).